The sequence spans 311 residues: Aspartate carbamoyltransferase catalytic subunit (311 aa).

Carbamoyl phosphate contacts are provided by Arg-59 and Thr-60. Residue Lys-87 coordinates L-aspartate. Residues Arg-109, His-139, and Gln-142 each contribute to the carbamoyl phosphate site. L-aspartate contacts are provided by Arg-172 and Arg-224. The carbamoyl phosphate site is built by Ala-265 and Pro-266.

The protein belongs to the aspartate/ornithine carbamoyltransferase superfamily. ATCase family. Heterododecamer (2C3:3R2) of six catalytic PyrB chains organized as two trimers (C3), and six regulatory PyrI chains organized as three dimers (R2).

It carries out the reaction carbamoyl phosphate + L-aspartate = N-carbamoyl-L-aspartate + phosphate + H(+). The protein operates within pyrimidine metabolism; UMP biosynthesis via de novo pathway; (S)-dihydroorotate from bicarbonate: step 2/3. Functionally, catalyzes the condensation of carbamoyl phosphate and aspartate to form carbamoyl aspartate and inorganic phosphate, the committed step in the de novo pyrimidine nucleotide biosynthesis pathway. This is Aspartate carbamoyltransferase catalytic subunit from Streptococcus pyogenes serotype M4 (strain MGAS10750).